We begin with the raw amino-acid sequence, 398 residues long: S-adenosylmethionine synthase (398 aa).

Residue histidine 19 participates in ATP binding. Aspartate 21 serves as a coordination point for Mg(2+). Glutamate 47 serves as a coordination point for K(+). L-methionine is bound by residues glutamate 60 and glutamine 103. The segment at 103-113 (QSPDIAQGVDV) is flexible loop. ATP contacts are provided by residues 177–179 (DGK), 243–244 (RF), aspartate 252, 258–259 (RK), alanine 275, and lysine 279. L-methionine is bound at residue aspartate 252. Position 283 (lysine 283) interacts with L-methionine.

This sequence belongs to the AdoMet synthase family. In terms of assembly, homotetramer; dimer of dimers. Mg(2+) is required as a cofactor. It depends on K(+) as a cofactor.

Its subcellular location is the cytoplasm. The catalysed reaction is L-methionine + ATP + H2O = S-adenosyl-L-methionine + phosphate + diphosphate. It participates in amino-acid biosynthesis; S-adenosyl-L-methionine biosynthesis; S-adenosyl-L-methionine from L-methionine: step 1/1. Functionally, catalyzes the formation of S-adenosylmethionine (AdoMet) from methionine and ATP. The overall synthetic reaction is composed of two sequential steps, AdoMet formation and the subsequent tripolyphosphate hydrolysis which occurs prior to release of AdoMet from the enzyme. The sequence is that of S-adenosylmethionine synthase from Symbiobacterium thermophilum (strain DSM 24528 / JCM 14929 / IAM 14863 / T).